The sequence spans 151 residues: SsrA-binding protein (151 aa).

Residues 132–151 are disordered; sequence KRQTIKKRDQDREIHRKYGI.

The protein belongs to the SmpB family.

The protein localises to the cytoplasm. Required for rescue of stalled ribosomes mediated by trans-translation. Binds to transfer-messenger RNA (tmRNA), required for stable association of tmRNA with ribosomes. tmRNA and SmpB together mimic tRNA shape, replacing the anticodon stem-loop with SmpB. tmRNA is encoded by the ssrA gene; the 2 termini fold to resemble tRNA(Ala) and it encodes a 'tag peptide', a short internal open reading frame. During trans-translation Ala-aminoacylated tmRNA acts like a tRNA, entering the A-site of stalled ribosomes, displacing the stalled mRNA. The ribosome then switches to translate the ORF on the tmRNA; the nascent peptide is terminated with the 'tag peptide' encoded by the tmRNA and targeted for degradation. The ribosome is freed to recommence translation, which seems to be the essential function of trans-translation. The chain is SsrA-binding protein from Lactobacillus johnsonii (strain CNCM I-12250 / La1 / NCC 533).